The sequence spans 344 residues: Uroporphyrinogen decarboxylase (344 aa).

Substrate-binding positions include 24–28, F43, D74, Y151, S206, and H323; that span reads RQAGR.

This sequence belongs to the uroporphyrinogen decarboxylase family. As to quaternary structure, homodimer.

The protein localises to the cytoplasm. It carries out the reaction uroporphyrinogen III + 4 H(+) = coproporphyrinogen III + 4 CO2. Its pathway is porphyrin-containing compound metabolism; protoporphyrin-IX biosynthesis; coproporphyrinogen-III from 5-aminolevulinate: step 4/4. Catalyzes the decarboxylation of four acetate groups of uroporphyrinogen-III to yield coproporphyrinogen-III. This Rhodobacter capsulatus (Rhodopseudomonas capsulata) protein is Uroporphyrinogen decarboxylase.